The sequence spans 61 residues: Short neurotoxin 1 (61 aa).

Cystine bridges form between cysteine 3–cysteine 23, cysteine 17–cysteine 40, cysteine 42–cysteine 53, and cysteine 54–cysteine 59.

Belongs to the three-finger toxin family. Short-chain subfamily. Type I alpha-neurotoxin sub-subfamily. In terms of tissue distribution, expressed by the venom gland.

The protein resides in the secreted. In terms of biological role, binds to muscle nicotinic acetylcholine receptor (nAChR) and inhibit acetylcholine from binding to the receptor, thereby impairing neuromuscular transmission. The polypeptide is Short neurotoxin 1 (Naja annulata annulata (Banded water cobra)).